The chain runs to 219 residues: Oligoribonuclease (219 aa).

The Exonuclease domain maps to leucine 30–leucine 193. Residue tyrosine 151 is part of the active site.

This sequence belongs to the oligoribonuclease family.

The protein resides in the cytoplasm. In terms of biological role, 3'-to-5' exoribonuclease specific for small oligoribonucleotides. This Ralstonia nicotianae (strain ATCC BAA-1114 / GMI1000) (Ralstonia solanacearum) protein is Oligoribonuclease.